The sequence spans 166 residues: Deglycase PfpI (166 aa).

Residues 1-166 enclose the PfpI endopeptidase domain; sequence MKILFLSANE…WMREFVKLLK (166 aa). Cys-100 (nucleophile) is an active-site residue. The active site involves His-101.

Belongs to the peptidase C56 family. In terms of assembly, homooligomer. Exists in two functional species: the predominant form is a homohexamer that comprises about 90% of the total activity, and the minor form is trimeric.

The protein resides in the cytoplasm. It catalyses the reaction N(omega)-(1-hydroxy-2-oxopropyl)-L-arginyl-[protein] + H2O = lactate + L-arginyl-[protein] + H(+). The enzyme catalyses N(6)-(1-hydroxy-2-oxopropyl)-L-lysyl-[protein] + H2O = lactate + L-lysyl-[protein] + H(+). It carries out the reaction S-(1-hydroxy-2-oxopropyl)-L-cysteinyl-[protein] + H2O = lactate + L-cysteinyl-[protein] + H(+). The catalysed reaction is N(omega)-(1-hydroxy-2-oxoethyl)-L-arginyl-[protein] + H2O = L-arginyl-[protein] + glycolate + H(+). It catalyses the reaction N(6)-(1-hydroxy-2-oxoethyl)-L-lysyl-[protein] + H2O = glycolate + L-lysyl-[protein] + H(+). The enzyme catalyses S-(1-hydroxy-2-oxoethyl)-L-cysteinyl-[protein] + H2O = glycolate + L-cysteinyl-[protein] + H(+). In terms of biological role, deglycase that catalyzes the deglycation of the Maillard adducts formed between amino groups of proteins and reactive carbonyl groups of glyoxals. Thus, functions as a protein deglycase that repairs methylglyoxal- and glyoxal-glycated proteins, and releases repaired proteins and lactate or glycolate, respectively. Deglycates cysteine, arginine and lysine residues in proteins, and thus reactivates these proteins by reversing glycation by glyoxals. Thus, was shown to afford full protection against glycation of thioredoxin by glyoxal. Acts on early glycation intermediates (hemithioacetals and aminocarbinols), preventing the formation of advanced glycation endproducts (AGE) that cause irreversible damage. Prevents acrylamide formation in asparagine/glyoxal and asparagine/sugar mixtures, likely by degrading asparagine/glyoxal Maillard adducts formed at high temperatures. Also displays proteolytic activity. Cleaves at the carboxyl side of both basic and hydrophobic residues in the P1 position, indicating trypsin- and chymotrypsin-like specificities. This is Deglycase PfpI from Pyrococcus furiosus (strain ATCC 43587 / DSM 3638 / JCM 8422 / Vc1).